The sequence spans 93 residues: MKPLVLLSALVLLSFQVQADPIQNTDEETKTEEQSGEEDQAVSVSFGDREGASLQEESLRDLVCYCRTRGCKRRERMNGTCRKGHLMYTLCCR.

The signal sequence occupies residues 1-19 (MKPLVLLSALVLLSFQVQA). A propeptide spanning residues 20–58 (DPIQNTDEETKTEEQSGEEDQAVSVSFGDREGASLQEES) is cleaved from the precursor. Residues 23–49 (QNTDEETKTEEQSGEEDQAVSVSFGDR) form a disordered region. 3 disulfide bridges follow: cysteine 64/cysteine 92, cysteine 66/cysteine 81, and cysteine 71/cysteine 91.

The protein belongs to the alpha-defensin family. As to expression, paneth cells of the small bowel.

It localises to the secreted. Has broad-spectrum antimicrobial properties. Has antibacterial activity against the Gram-positive bacterium L.monocytogenes EGD and the Gram-negative bacteria E.coli ML-35p and avirulent S.typhimurium 7953, but not against the mouse-virulent S.typhimurium 14028S. Probably contributes to the antimicrobial barrier function of the small bowel mucosa. This chain is Alpha-defensin 2 (Defa2), found in Mus musculus (Mouse).